Reading from the N-terminus, the 241-residue chain is tRNA (guanine-N(7)-)-methyltransferase B (241 aa).

Residues G61, E84, R86, N117, A118, and L137 each contribute to the S-adenosyl-L-methionine site. The active site involves D140. The tract at residues 141-149 (PHFKKTKHK) is alphaC helix. S-adenosyl-L-methionine is bound by residues T215 and E217. Residues 215–223 (TEEGKKVQR) are alpha6 helix.

This sequence belongs to the class I-like SAM-binding methyltransferase superfamily. TrmB family. Catalytic component of the METTL1-WDR4 complex, composed of mettl1 and wdr4.

It localises to the nucleus. It catalyses the reaction guanosine(46) in tRNA + S-adenosyl-L-methionine = N(7)-methylguanosine(46) in tRNA + S-adenosyl-L-homocysteine. It carries out the reaction a guanosine in mRNA + S-adenosyl-L-methionine = an N(7)-methylguanosine in mRNA + S-adenosyl-L-homocysteine. The enzyme catalyses a guanosine in miRNA + S-adenosyl-L-methionine = an N(7)-methylguanosine in miRNA + S-adenosyl-L-homocysteine. It functions in the pathway tRNA modification; N(7)-methylguanine-tRNA biosynthesis. In terms of biological role, catalytic component of METTL1-WDR4 methyltransferase complex that mediates the formation of N(7)-methylguanine in a subset of RNA species, such as tRNAs, mRNAs and microRNAs (miRNAs). Catalyzes the formation of N(7)-methylguanine at position 46 (m7G46) in a large subset of tRNAs that contain the 5'-RAGGU-3' motif within the variable loop. M7G46 interacts with C13-G22 in the D-loop to stabilize tRNA tertiary structure and protect tRNAs from decay. Also acts as a methyltransferase for a subset of internal N(7)-methylguanine in mRNAs. Internal N(7)-methylguanine methylation of mRNAs in response to stress promotes their relocalization to stress granules, thereby suppressing their translation. Also methylates a specific subset of miRNAs. In Xenopus tropicalis (Western clawed frog), this protein is tRNA (guanine-N(7)-)-methyltransferase B (mettl1-B).